The following is a 205-amino-acid chain: MSNIVWHQHSVDQAARARLKGQNPVLLWFTGLSGAGKSTLAGALERALFEAGFHTYLLDGDNVRHGLCKDLGFSVADRDENLRRVGEVAKLMVDAGLVVLSAFISPTREERDSIRARFPEGQFIEVHVSTPLSVCELRDPKGLYVKARKGEIAHFTGISSPYEAPLSAELTIDTSKGDLASQVHALIDYLTAIDVISSNRLASLA.

31–38 is a binding site for ATP; sequence GLSGAGKS. The active-site Phosphoserine intermediate is serine 105.

The protein belongs to the APS kinase family.

The catalysed reaction is adenosine 5'-phosphosulfate + ATP = 3'-phosphoadenylyl sulfate + ADP + H(+). Its pathway is sulfur metabolism; hydrogen sulfide biosynthesis; sulfite from sulfate: step 2/3. Its function is as follows. Catalyzes the synthesis of activated sulfate. The chain is Adenylyl-sulfate kinase from Shewanella oneidensis (strain ATCC 700550 / JCM 31522 / CIP 106686 / LMG 19005 / NCIMB 14063 / MR-1).